A 250-amino-acid chain; its full sequence is Small ribosomal subunit protein uS3 (250 aa).

Positions 39–111 constitute a KH type-2 domain; it reads IRPLIKNHYP…KVQINIFEVK (73 aa).

It belongs to the universal ribosomal protein uS3 family. As to quaternary structure, part of the 30S ribosomal subunit. Forms a tight complex with proteins S10 and S14.

In terms of biological role, binds the lower part of the 30S subunit head. Binds mRNA in the 70S ribosome, positioning it for translation. The protein is Small ribosomal subunit protein uS3 of Ziziphus jujuba witches'-broom phytoplasma.